Consider the following 511-residue polypeptide: Ribonuclease Y (511 aa).

The helical transmembrane segment at Ile2–Leu22 threads the bilayer. Residues Ser201–Leu261 enclose the KH domain. Positions Leu327–Ala420 constitute an HD domain.

The protein belongs to the RNase Y family.

The protein resides in the cell membrane. Its function is as follows. Endoribonuclease that initiates mRNA decay. In Phocaeicola vulgatus (strain ATCC 8482 / DSM 1447 / JCM 5826 / CCUG 4940 / NBRC 14291 / NCTC 11154) (Bacteroides vulgatus), this protein is Ribonuclease Y.